The sequence spans 326 residues: Type II secretion system protein K (326 aa).

The propeptide at 1–7 is leader sequence; it reads MNHRQRG. A helical transmembrane segment spans residues 8-28; it reads IALLMVLLILALMMVLASAMT. The Periplasmic portion of the chain corresponds to 29–326; the sequence is ERSARMYQQT…RYGIYWVADE (298 aa).

It belongs to the GSP K family. In terms of assembly, type II secretion is composed of four main components: the outer membrane complex, the inner membrane complex, the cytoplasmic secretion ATPase and the periplasm-spanning pseudopilus. Interacts with core component PulG. Post-translationally, cleaved by prepilin peptidase.

Its subcellular location is the cell inner membrane. Component of the type II secretion system required for the energy-dependent secretion of extracellular factors such as proteases and toxins from the periplasm. Plays a role in pseudopilus assembly and seems to control its length. Interacts with the pseudopilus tip complex that is critical for the recognition and binding of secretion substrates. The polypeptide is Type II secretion system protein K (pulK) (Klebsiella pneumoniae).